Consider the following 158-residue polypeptide: MTSSSPSPQASMLLYWHENQYDDRNFQIHGRTLFFALALFSVVLFFALLTLYIHRNCLPRDSINLHASSPDRLTRCRSGGLDPAEIRSLPVVLCRRERAEEEEEKECCICLGGFEEGEKMKVLPPCSHCYHCECVDRWLKTESSCPLCRVSIRVDSSS.

Residues 33-53 (LFFALALFSVVLFFALLTLYI) traverse the membrane as a helical segment. The RING-type; atypical zinc-finger motif lies at 107-149 (CCICLGGFEEGEKMKVLPPCSHCYHCECVDRWLKTESSCPLCR).

It belongs to the RING-type zinc finger family. ATL subfamily.

It is found in the membrane. The catalysed reaction is S-ubiquitinyl-[E2 ubiquitin-conjugating enzyme]-L-cysteine + [acceptor protein]-L-lysine = [E2 ubiquitin-conjugating enzyme]-L-cysteine + N(6)-ubiquitinyl-[acceptor protein]-L-lysine.. It participates in protein modification; protein ubiquitination. The sequence is that of RING-H2 finger protein ATL66 (ATL66) from Arabidopsis thaliana (Mouse-ear cress).